A 527-amino-acid polypeptide reads, in one-letter code: Butyrophilin subfamily 2 member A1 (527 aa).

An N-terminal signal peptide occupies residues 1-28; it reads MESAAALHFSRPASLLLLLLSLCALVSA. Positions 29 to 141 constitute an Ig-like V-type domain; the sequence is QFIVVGPTDP…SYDEAILHLV (113 aa). The Extracellular segment spans residues 29-248; that stretch reads QFIVVGPTDP…SFMPSVSPCA (220 aa). N-linked (GlcNAc...) asparagine glycans are attached at residues N46, N114, and N120. C51 and C125 are disulfide-bonded. A helical transmembrane segment spans residues 249–269; the sequence is VALPIIVVILMIPIAVCIYWI. Over 270–527 the chain is Cytoplasmic; the sequence is NKLQKEKKIL…LHRVGTHQSL (258 aa). The 197-residue stretch at 310–506 folds into the B30.2/SPRY domain; the sequence is VKEKLQEELR…IFICPALTGA (197 aa).

The protein belongs to the immunoglobulin superfamily. BTN/MOG family. As to expression, highly expressed in brain, bone marrow, small intestine, muscle, spleen and pancreas. Moderate expression was seen in lung, liver and kidney.

The protein localises to the membrane. This Homo sapiens (Human) protein is Butyrophilin subfamily 2 member A1 (BTN2A1).